We begin with the raw amino-acid sequence, 400 residues long: Tryptophan 2,3-dioxygenase (400 aa).

Substrate contacts are provided by residues 75–79 (FIIIH) and Arg146. His332 is a heme binding site. Thr346 provides a ligand contact to substrate.

This sequence belongs to the tryptophan 2,3-dioxygenase family. As to quaternary structure, homotetramer. Dimer of dimers. It depends on heme as a cofactor.

It carries out the reaction L-tryptophan + O2 = N-formyl-L-kynurenine. It participates in amino-acid degradation; L-tryptophan degradation via kynurenine pathway; L-kynurenine from L-tryptophan: step 1/2. Functionally, heme-dependent dioxygenase that catalyzes the oxidative cleavage of the L-tryptophan (L-Trp) pyrrole ring and converts L-tryptophan to N-formyl-L-kynurenine. Catalyzes the oxidative cleavage of the indole moiety. This Dictyostelium discoideum (Social amoeba) protein is Tryptophan 2,3-dioxygenase.